Reading from the N-terminus, the 363-residue chain is Cytoplasmic tRNA 2-thiolation protein 1 (363 aa).

A disordered region spans residues 340–363; sequence ASLNGTPRTPPTPAEPVEGIERAA.

It belongs to the TtcA family. CTU1/NCS6/ATPBD3 subfamily.

It localises to the cytoplasm. The protein operates within tRNA modification; 5-methoxycarbonylmethyl-2-thiouridine-tRNA biosynthesis. Plays a central role in 2-thiolation of mcm(5)S(2)U at tRNA wobble positions of tRNA(Lys), tRNA(Glu) and tRNA(Gln). Directly binds tRNAs and probably acts by catalyzing adenylation of tRNAs, an intermediate required for 2-thiolation. It is unclear whether it acts as a sulfurtransferase that transfers sulfur from thiocarboxylated URM1 onto the uridine of tRNAs at wobble position. Prior mcm(5) tRNA modification by the elongator complex is required for 2-thiolation. May also be involved in protein urmylation. The protein is Cytoplasmic tRNA 2-thiolation protein 1 of Cryptococcus neoformans var. neoformans serotype D (strain B-3501A) (Filobasidiella neoformans).